The following is a 323-amino-acid chain: Annexin A3 (323 aa).

At alanine 2 the chain carries N-acetylalanine. Annexin repeat units lie at residues 18 to 89 (FSPS…ALVT), 90 to 161 (PPAV…TLAD), 173 to 245 (HLAK…AIVN), and 249 to 320 (NTPA…KICG). Phosphothreonine is present on threonine 267.

This sequence belongs to the annexin family.

Functionally, inhibitor of phospholipase A2, also possesses anti-coagulant properties. Also cleaves the cyclic bond of inositol 1,2-cyclic phosphate to form inositol 1-phosphate. In Homo sapiens (Human), this protein is Annexin A3 (ANXA3).